We begin with the raw amino-acid sequence, 174 residues long: Peptide deformylase (174 aa).

Fe cation-binding residues include cysteine 96 and histidine 138. Residue glutamate 139 is part of the active site. Position 142 (histidine 142) interacts with Fe cation.

The protein belongs to the polypeptide deformylase family. Fe(2+) is required as a cofactor.

It catalyses the reaction N-terminal N-formyl-L-methionyl-[peptide] + H2O = N-terminal L-methionyl-[peptide] + formate. Functionally, removes the formyl group from the N-terminal Met of newly synthesized proteins. Requires at least a dipeptide for an efficient rate of reaction. N-terminal L-methionine is a prerequisite for activity but the enzyme has broad specificity at other positions. The protein is Peptide deformylase of Helicobacter pylori (strain HPAG1).